A 71-amino-acid chain; its full sequence is Disintegrin halysin (71 aa).

One can recognise a Disintegrin domain in the interval 1-71 (EAGEECDCGS…ISAGCPRNPF (71 aa)). 6 disulfide bridges follow: cysteine 6–cysteine 21, cysteine 8–cysteine 16, cysteine 15–cysteine 38, cysteine 29–cysteine 35, cysteine 34–cysteine 59, and cysteine 47–cysteine 66. The Cell attachment site signature appears at 51–53 (RGD).

Belongs to the venom metalloproteinase (M12B) family. P-II subfamily. P-IIa sub-subfamily. As to quaternary structure, monomer. Expressed by the venom gland.

It is found in the secreted. Functionally, inhibits fibrinogen interaction with platelets. Acts by binding to alpha-IIb/beta-3 (ITGA2B/ITGB3) on the platelet surface and inhibits aggregation induced by ADP, thrombin, platelet-activating factor and collagen. The sequence is that of Disintegrin halysin from Gloydius blomhoffii (Mamushi).